The chain runs to 131 residues: Superoxide dismutase [Ni] (131 aa).

Positions 1–14 (MLSRLFAPKVKVSA) are excised as a propeptide. Residues His-15, Cys-16, and Cys-20 each contribute to the Ni(2+) site.

This sequence belongs to the nickel superoxide dismutase family. Homohexamer. The hexameric protein has roughly the shape of a hollow sphere with an outer diameter of 72 Angstroms and a large inner cavity. Ni(2+) serves as cofactor.

It is found in the cytoplasm. The catalysed reaction is 2 superoxide + 2 H(+) = H2O2 + O2. The protein is Superoxide dismutase [Ni] (sodN) of Streptomyces seoulensis.